Here is a 294-residue protein sequence, read N- to C-terminus: Tyrosine-protein phosphatase (294 aa).

A signal peptide spans 1–24; that stretch reads MKTHHANLALALMLGLSSSATAVA. The Phosphocysteine intermediate role is filled by C182. Basic and acidic residues-rich tracts occupy residues 221–231 and 238–247; these read QPKDSDERADH and PGDRPQDGGH. Residues 221-252 form a disordered region; sequence QPKDSDERADHGAGQAEPGDRPQDGGHGRYRA.

It belongs to the protein-tyrosine phosphatase family. In terms of assembly, monomer.

It carries out the reaction O-phospho-L-tyrosyl-[protein] + H2O = L-tyrosyl-[protein] + phosphate. This is Tyrosine-protein phosphatase (iphP) from Nostoc commune.